The sequence spans 529 residues: Neuronal acetylcholine receptor subunit alpha-2 (529 aa).

The first 26 residues, 1–26, serve as a signal peptide directing secretion; that stretch reads MGPSCPVFLSFTKLSLWWLLLTPAGG. Positions 27-56 are disordered; sequence EEAKRPPPRAPGDPLSSPSPTALPQGGSHT. Residues 27 to 264 are Extracellular-facing; the sequence is EEAKRPPPRA…VTYAFVIRRL (238 aa). 2 N-linked (GlcNAc...) asparagine glycosylation sites follow: N79 and N129. Cysteines 183 and 197 form a disulfide. N235 carries an N-linked (GlcNAc...) asparagine glycan. C247 and C248 are joined by a disulfide. 3 helical membrane-spanning segments follow: residues 265-289, 297-315, and 331-352; these read PLFY…VFYL, ITLC…LLIT, and YLLF…VLNV. Topologically, residues 353–502 are cytoplasmic; the sequence is HHRSPSTHTM…WKYVAMVIDR (150 aa). Residues 503-521 form a helical membrane-spanning segment; it reads IFLWLFIIVCFLGTIGLFL.

The protein belongs to the ligand-gated ion channel (TC 1.A.9) family. Acetylcholine receptor (TC 1.A.9.1) subfamily. Alpha-2/CHRNA2 sub-subfamily. As to quaternary structure, neuronal AChR is composed of two different types of subunits: alpha and non-alpha (beta). CHRNA2/alpha-2 subunit can be combined to CHRNB2/beta-2 or CHRNB4/beta-4 to give rise to functional receptors. Both CHRNA2:CHRNB2 and CHRNA2:CHRNB4 nAChR complexes are heteropentamers with two subtypes: LS (low agonist sensitivity) with a (CHRNA2)3:(CHRNB2/4)2 and HS (high agonist sensitivity) with a (CHRNA2)2:(CHRNB2/4)3 stoichiometries; the subtypes differ in their subunit binding interfaces which are involved in ligand binding.

It is found in the synaptic cell membrane. The protein resides in the cell membrane. The enzyme catalyses Ca(2+)(in) = Ca(2+)(out). It catalyses the reaction K(+)(in) = K(+)(out). The catalysed reaction is Na(+)(in) = Na(+)(out). In terms of biological role, component of neuronal acetylcholine receptors (nAChRs) that function as pentameric, ligand-gated cation channels with high calcium permeability among other activities. nAChRs are excitatory neurotrasnmitter receptors formed by a collection of nAChR subunits known to mediate synaptic transmission in the nervous system and the neuromuscular junction. Each nAchR subunit confers differential attributes to channel properties, including activation, deactivation and desensitization kinetics, pH sensitivity, cation permeability, and binding to allosteric modulators. CHRNA2 forms heteropentameric neuronal acetylcholine receptors with CHRNB2 and CHRNB4 and plays a role in nicotine dependence. The chain is Neuronal acetylcholine receptor subunit alpha-2 from Homo sapiens (Human).